A 404-amino-acid polypeptide reads, in one-letter code: 2,3-bisphosphoglycerate-independent phosphoglycerate mutase (404 aa).

The interval 155–183 is disordered; the sequence is LSDMIGDSDPHREGLPPEKIRPTDPSGDR. The span at 162 to 183 shows a compositional bias: basic and acidic residues; the sequence is SDPHREGLPPEKIRPTDPSGDR.

The protein belongs to the BPG-independent phosphoglycerate mutase family. A-PGAM subfamily.

It carries out the reaction (2R)-2-phosphoglycerate = (2R)-3-phosphoglycerate. The protein operates within carbohydrate degradation; glycolysis; pyruvate from D-glyceraldehyde 3-phosphate: step 3/5. Functionally, catalyzes the interconversion of 2-phosphoglycerate and 3-phosphoglycerate. This chain is 2,3-bisphosphoglycerate-independent phosphoglycerate mutase, found in Thermoplasma acidophilum (strain ATCC 25905 / DSM 1728 / JCM 9062 / NBRC 15155 / AMRC-C165).